The primary structure comprises 308 residues: MGFKGYILSIVFNGKDFANKYYLMLKEFLKQHNLRDKIALKVVLANDEPASNLYVSIKSRVAKEIGLNVEVIKFSANSVQSDILEVIDRENKNLSTDGIIVQLPLLKGMDLNSILNSIVYSKDVDGLSFVNLGKMILGDKKGFIPCTALAVLKILRDEGIKTLGKTVVVVGRSPLVGRPISILLSSKPYDATVIVCHSKSIYLDVYLRQADIVISAVGKPRLIDKSMLCGKPYVIDIGISEIETDNGKILSGDTDFDNIKECVKFITPVKGGIGPVTVLMLMFNTIKAHLINNRMFDVLNRLEKLLEV.

Residues Gly171–Ser173, Ser198, and Ile239 each bind NADP(+).

Belongs to the tetrahydrofolate dehydrogenase/cyclohydrolase family. Homodimer.

The enzyme catalyses (6R)-5,10-methylene-5,6,7,8-tetrahydrofolate + NADP(+) = (6R)-5,10-methenyltetrahydrofolate + NADPH. The catalysed reaction is (6R)-5,10-methenyltetrahydrofolate + H2O = (6R)-10-formyltetrahydrofolate + H(+). Its pathway is one-carbon metabolism; tetrahydrofolate interconversion. In terms of biological role, catalyzes the oxidation of 5,10-methylenetetrahydrofolate to 5,10-methenyltetrahydrofolate and then the hydrolysis of 5,10-methenyltetrahydrofolate to 10-formyltetrahydrofolate. The polypeptide is Bifunctional protein FolD (Borreliella burgdorferi (strain ATCC 35210 / DSM 4680 / CIP 102532 / B31) (Borrelia burgdorferi)).